The sequence spans 184 residues: ADP-ribosylation factor-like protein 3 (184 aa).

G2 carries N-myristoyl glycine lipidation. GTP is bound by residues 24 to 31 (GLDNAGKT), 68 to 72 (DIGGQ), and 127 to 130 (NKQD).

This sequence belongs to the small GTPase superfamily. Arf family.

The protein resides in the golgi apparatus. GTP-binding protein that may be involved in protein trafficking; may modulate vesicle budding and uncoating within the Golgi apparatus. The sequence is that of ADP-ribosylation factor-like protein 3 (arl-3) from Caenorhabditis elegans.